A 375-amino-acid polypeptide reads, in one-letter code: Phytanoyl-CoA hydroxylase-interacting protein-like (375 aa).

Phosphoserine occurs at positions 11, 12, and 15. N-linked (GlcNAc...) asparagine glycosylation occurs at Asn22. A Phosphoserine modification is found at Ser24. N-linked (GlcNAc...) asparagine glycosylation occurs at Asn36. The region spanning 51–160 (VPHNIKINNI…EIIEFCTADY (110 aa)) is the Fibronectin type-III domain.

It belongs to the PHYHIP family.

Functionally, may play a role in the development of the central system. This Mus musculus (Mouse) protein is Phytanoyl-CoA hydroxylase-interacting protein-like (Phyhipl).